Here is a 255-residue protein sequence, read N- to C-terminus: Electron transfer flavoprotein subunit beta (255 aa).

An N-acetylalanine modification is found at A2. Residues A9, N39–C42, C66, and G123–T134 contribute to the AMP site. Positions A183–K205 are recognition loop. Residue K200 is modified to N6,N6,N6-trimethyllysine; by ETFBKMT; alternate. K200 bears the N6-acetyllysine; alternate mark. K200 carries the post-translational modification N6-methyllysine; alternate. An N6,N6,N6-trimethyllysine; by ETFBKMT modification is found at K203. N6-acetyllysine; alternate is present on K210. At K210 the chain carries N6-succinyllysine; alternate. Phosphoserine is present on residues S223 and S226. K238 is modified (N6-acetyllysine). K248 carries the post-translational modification N6-acetyllysine; alternate. K248 is subject to N6-succinyllysine; alternate.

The protein belongs to the ETF beta-subunit/FixA family. In terms of assembly, heterodimer composed of ETFA and ETFB. Identified in a complex that contains ETFA, ETFB and ETFRF1. Interacts with ACADM. In terms of processing, methylated. Trimethylation at Lys-200 and Lys-203 may negatively regulate the activity in electron transfer from acyl-CoA dehydrogenases.

It localises to the mitochondrion matrix. In terms of biological role, heterodimeric electron transfer flavoprotein that accepts electrons from several mitochondrial dehydrogenases, including acyl-CoA dehydrogenases, glutaryl-CoA and sarcosine dehydrogenase. It transfers the electrons to the main mitochondrial respiratory chain via ETF-ubiquinone oxidoreductase. Required for normal mitochondrial fatty acid oxidation and normal amino acid metabolism. ETFB binds an AMP molecule that probably has a purely structural role. In Sus scrofa (Pig), this protein is Electron transfer flavoprotein subunit beta.